Here is a 458-residue protein sequence, read N- to C-terminus: Sushi repeat-containing protein SRPX2 (458 aa).

The signal sequence occupies residues Met1–Ser18. 3 Sushi domains span residues Ala62–Arg112, Ile113–Asp171, and Arg255–Pro314. 4 cysteine pairs are disulfide-bonded: Cys64–Cys98, Cys84–Cys110, Cys115–Cys156, and Cys142–Cys169. In terms of domain architecture, HYR spans Val170–Val254. Intrachain disulfides connect Cys257–Cys299 and Cys285–Cys312.

Forms homooligomers.

The protein resides in the secreted. It is found in the cytoplasm. The protein localises to the cell surface. It localises to the synapse. Functionally, may play a role in angiogenesis, synapse formation, cellular migration and adhesion. This chain is Sushi repeat-containing protein SRPX2 (srpx2), found in Xenopus laevis (African clawed frog).